The chain runs to 470 residues: Methylenetetrahydrofolate--tRNA-(uracil-5-)-methyltransferase TrmFO (470 aa).

10-15 (GAGLAG) contacts FAD.

Belongs to the MnmG family. TrmFO subfamily. The cofactor is FAD.

It is found in the cytoplasm. It catalyses the reaction uridine(54) in tRNA + (6R)-5,10-methylene-5,6,7,8-tetrahydrofolate + NADH + H(+) = 5-methyluridine(54) in tRNA + (6S)-5,6,7,8-tetrahydrofolate + NAD(+). The catalysed reaction is uridine(54) in tRNA + (6R)-5,10-methylene-5,6,7,8-tetrahydrofolate + NADPH + H(+) = 5-methyluridine(54) in tRNA + (6S)-5,6,7,8-tetrahydrofolate + NADP(+). Functionally, catalyzes the folate-dependent formation of 5-methyl-uridine at position 54 (M-5-U54) in all tRNAs. The sequence is that of Methylenetetrahydrofolate--tRNA-(uracil-5-)-methyltransferase TrmFO from Prochlorococcus marinus subsp. pastoris (strain CCMP1986 / NIES-2087 / MED4).